Reading from the N-terminus, the 940-residue chain is MGSGPIDPKELLKGLDSFLNRDGEVKSVDGISKIFSLMKEARKMVSRCTYLNILLQTRSPEILVKFIDVGGYKLLNNWLTYSKTTNNIPLLQQILLTLQHLPLTVDHLKQNNTAKLVKQLSKSSEDEELRKLASVLVSDWMAVIRSQSSTQPAEKDKKKRKDEGKSRTTLPERPLTEVKAETRAEEAPEKKREKPKSLRTTAPSHAKFRSTGLELETPSLVPVKKNASTVVVSDKYNLKPIPLKRQSNVAAPGDATPPAEKKYKPLNTTPNATKEIKVKIIPPQPMEGLGFLDALNSAPVPGIKIKKKKKVLSPTAAKPSPFEGKTSTEPSTAKPSSPEPAPPSEAMEADRPGTPVPPVEVPELMDTASLEPGALDAKPVESPGDPNQLTRKGRKRKSVTWPEEGKLREYFYFELDETERVNVNKIKDFGEAAKREILSDRHAFETARRLSHDNMEEKVPWVCPRPLVLPSPLVTPGSNSQERYIQAEREKGILQELFLNKESPHEPDPEPYEPIPPKLIPLDEECSMDETPYVETLEPGGSGGSPDGAGGSKLPPVLANLMGSMGAGKGPQGPGAGGINVQEILTSIMGSPNSHPSEELLKQPDYSDKIKQMLVPHGLLGPGPIANGFPPGGPGGPKGMQHFPPGPGGPMPGPHGGPGGPVGPRLLGPPPPPRGGDPFWDGPGDPMRGGPMRGGPGPGPGPYHRGRGGRGGNEPPPPPPPFRGARGGRSGGGPPNGRGGPGGGMVGGGGHRPHEGPGGGMGNNSGHRPHEGPGGGMGSGHRPHEGPAGSMGGGGGHRPHEGPGGGISGGSGHRPHEGPGGGMGAGGGHRPHEGPGGSMGGSGGHRPHEGPGHGGPHGHRPHDVPGHRGHDHRGPPPHEHRGHDGPGHGGGGHRGHDGGHSHGGDMSNRPVCRHFMMKGNCRYENNCAFYHPGVNGPPLP.

The interval 1–348 (MGSGPIDPKE…EPAPPSEAME (348 aa)) is interaction with TOX4. The 75-residue stretch at 73-147 (KLLNNWLTYS…SDWMAVIRSQ (75 aa)) folds into the TFIIS N-terminal domain. Disordered stretches follow at residues 147–210 (QSST…KFRS), 248–270 (NVAA…NTTP), 304–400 (KIKK…KSVT), and 534–557 (VETL…LPPV). Composition is skewed to basic and acidic residues over residues 153-166 (AEKD…EGKS) and 174-196 (PLTE…EKPK). Residue lysine 179 forms a Glycyl lysine isopeptide (Lys-Gly) (interchain with G-Cter in SUMO2) linkage. The residue at position 256 (threonine 256) is a Phosphothreonine. A Glycyl lysine isopeptide (Lys-Gly) (interchain with G-Cter in SUMO2) cross-link involves residue lysine 262. Position 313 is a phosphoserine (serine 313). A compositionally biased stretch (low complexity) spans 325-336 (KTSTEPSTAKPS). Residues 357–433 (PPVEVPELMD…NKIKDFGEAA (77 aa)) are necessary for interaction with PPP1CA. At serine 382 the chain carries Phosphoserine. A necessary for interaction with PPP1CC region spans residues 393 to 408 (GRKRKSVTWPEEGKLR). The PP1-binding motif motif lies at 394–423 (RKRKSVTWPEEGKLREYFYFELDETERVNV). Serine 398 is modified (phosphoserine; by PKA). An interaction with WDR82 region spans residues 418 to 619 (TERVNVNKIK…IKQMLVPHGL (202 aa)). A compositionally biased stretch (gly residues) spans 540–551 (GGSGGSPDGAGG). 2 positions are modified to phosphoserine: serine 545 and serine 591. Residues 617-905 (HGLLGPGPIA…HDGGHSHGGD (289 aa)) form a disordered region. Positions 644 to 655 (PPGPGGPMPGPH) are enriched in pro residues. Arginine 665 carries the post-translational modification Omega-N-methylarginine. A compositionally biased stretch (low complexity) spans 676-690 (GDPFWDGPGDPMRGG). Arginine 693 and arginine 738 each carry omega-N-methylarginine. Gly residues-rich tracts occupy residues 725–763 (ARGG…GMGN) and 789–844 (GSMG…GSGG). 2 stretches are compositionally biased toward basic and acidic residues: residues 861 to 886 (PHDV…HDGP) and 894 to 903 (RGHDGGHSHG). A C3H1-type zinc finger spans residues 906–934 (MSNRPVCRHFMMKGNCRYENNCAFYHPGV).

In terms of assembly, component of the PNUTS-PP1 complex (also named PTW/PP1 complex), composed of PPP1R10/PNUTS, TOX4, WDR82, and PPP1CA (or PPP1CB or PPP1CC). Post-translationally, phosphorylated on Ser-398 by PKA within the region necessary for interaction with PPP1CA.

It localises to the nucleus. The protein resides in the chromosome. In terms of biological role, substrate-recognition component of the PNUTS-PP1 protein phosphatase complex, a protein phosphatase 1 (PP1) complex that promotes RNA polymerase II transcription pause-release, allowing transcription elongation. Promoter-proximal pausing by RNA polymerase II is a transcription halt following transcription initiation but prior to elongation, which acts as a checkpoint to control that transcripts are favorably configured for transcriptional elongation. The PNUTS-PP1 complex mediates the release of RNA polymerase II from promoter-proximal region of genes by catalyzing dephosphorylation of proteins involved in transcription, such as AFF4, CDK9, MEPCE, INTS12, NCBP1, POLR2M/GDOWN1 and SUPT6H. The PNUTS-PP1 complex also regulates RNA polymerase II transcription termination by mediating dephosphorylation of SUPT5H in termination zones downstream of poly(A) sites, thereby promoting deceleration of RNA polymerase II transcription. PNUTS-PP1 complex is also involved in the response to replication stress by mediating dephosphorylation of POLR2A at 'Ser-5' of the CTD, promoting RNA polymerase II degradation. The PNUTS-PP1 complex also plays a role in the control of chromatin structure and cell cycle progression during the transition from mitosis into interphase. PNUTS-PP1 complex mediates dephosphorylation of MYC, promoting MYC stability by preventing MYC ubiquitination by the SCF(FBXW7) complex. In addition to acts as a substrate-recognition component, PPP1R10/PNUTS also acts as a nuclear targeting subunit for the PNUTS-PP1 complex. In some context, PPP1R10/PNUTS also acts as an inhibitor of protein phosphatase 1 (PP1) activity by preventing access to substrates, such as RB. This Pan troglodytes (Chimpanzee) protein is Serine/threonine-protein phosphatase 1 regulatory subunit 10 (PPP1R10).